Consider the following 213-residue polypeptide: MIEELAREIVKRFPRNHKETDPFRVLISTVLSQRTRDENTEKASKKLFEVYRTPQELAKAKPEDLYDLIKESGMYRQKAERIVEISRILVEKYGGRVPDSLEELLKLPGVGRKTANIVLWVGFKKPALAVDTHVHRISNRLGWVKTRTPEETEEALKKLLPEDLWGPINGSMVEFGRRICKPQNPLCEECFLKNHCEFYRRRGKGEVRNRTER.

Positions 101–120 (LEELLKLPGVGRKTANIVLW) constitute a HhH domain. The [4Fe-4S] cluster site is built by cysteine 180, cysteine 187, cysteine 190, and cysteine 196.

Belongs to the Nth/MutY family. [4Fe-4S] cluster is required as a cofactor.

The catalysed reaction is 2'-deoxyribonucleotide-(2'-deoxyribose 5'-phosphate)-2'-deoxyribonucleotide-DNA = a 3'-end 2'-deoxyribonucleotide-(2,3-dehydro-2,3-deoxyribose 5'-phosphate)-DNA + a 5'-end 5'-phospho-2'-deoxyribonucleoside-DNA + H(+). Functionally, DNA repair enzyme that has both DNA N-glycosylase activity and AP-lyase activity. The DNA N-glycosylase activity releases various damaged pyrimidines from DNA by cleaving the N-glycosidic bond, leaving an AP (apurinic/apyrimidinic) site. The AP-lyase activity cleaves the phosphodiester bond 3' to the AP site by a beta-elimination, leaving a 3'-terminal unsaturated sugar and a product with a terminal 5'-phosphate. In Thermotoga maritima (strain ATCC 43589 / DSM 3109 / JCM 10099 / NBRC 100826 / MSB8), this protein is Endonuclease III.